The following is a 2766-amino-acid chain: PDZ domain-containing protein 2 (2766 aa).

In terms of domain architecture, PDZ 1 spans L85 to R177. Disordered regions lie at residues G189–K315 and M419–S452. Residues T242–A254 are compositionally biased toward acidic residues. Residues H280–K296 are compositionally biased toward basic and acidic residues. The 86-residue stretch at K334–M419 folds into the PDZ 2 domain. The residue at position 517 (S517) is a Phosphoserine. In terms of domain architecture, PDZ 3 spans I535–K621. The span at L627 to M636 shows a compositional bias: polar residues. The segment at L627–K673 is disordered. Over residues S637–G650 the composition is skewed to low complexity. In terms of domain architecture, PDZ 4 spans E679–H764. Residues Y783–G794 show a composition bias toward polar residues. 2 disordered regions span residues Y783 to S803 and A834 to S853. S891 and S895 each carry phosphoserine. Disordered stretches follow at residues N915–E966, H990–L1425, I1456–T1531, D1725–Q1909, D1924–S1967, E2015–V2070, F2146–G2174, D2262–T2397, Q2424–D2450, and T2465–P2496. A compositionally biased stretch (acidic residues) spans S918 to G927. Residues G1021–V1038 are compositionally biased toward basic and acidic residues. Composition is skewed to polar residues over residues T1040–L1061, P1126–P1137, and S1189–I1220. Composition is skewed to low complexity over residues S1379–A1393 and I1456–S1471. S1767 bears the Phosphoserine mark. Positions C1797–S1806 are enriched in basic residues. Residues L1884–T1901 are compositionally biased toward polar residues. Composition is skewed to low complexity over residues D1924 to G1937 and S1947 to G1963. Low complexity-rich tracts occupy residues P2280–S2296 and R2305–L2321. Polar residues-rich tracts occupy residues P2322–G2347 and P2362–S2372. One can recognise a PDZ 5 domain in the interval F2550–K2634. The disordered stretch occupies residues G2635 to A2667. The PDZ 6 domain occupies C2678–H2763.

Interacts with SCN10A, CTNND2 and PKP4. A secreted form is produced by caspase-mediated proteolytic cleavage. In terms of tissue distribution, expressed in the heart, liver, brain, spleen, lung, kidney, testis and skeletal muscle.

It localises to the nucleus. The protein resides in the cytoplasm. Its subcellular location is the endoplasmic reticulum. It is found in the cell junction. The protein localises to the secreted. In Rattus norvegicus (Rat), this protein is PDZ domain-containing protein 2 (Pdzd2).